A 22-amino-acid polypeptide reads, in one-letter code: Mu-conotoxin GIIIB (22 aa).

Cystine bridges form between C3–C15, C4–C20, and C10–C21. 4-hydroxyproline; partial occurs at positions 6 and 7. P17 bears the 4-hydroxyproline mark. Alanine amide is present on A22.

The protein belongs to the conotoxin M superfamily. Expressed by the venom duct.

It is found in the secreted. Functionally, mu-conotoxins block voltage-gated sodium channels (Nav). The polypeptide is Mu-conotoxin GIIIB (Conus geographus (Geography cone)).